A 224-amino-acid polypeptide reads, in one-letter code: UPF0758 protein Bpro_0948 (224 aa).

The region spanning 102–224 is the MPN domain; the sequence is LFSTPQAVRD…AVSMAELGLL (123 aa). Residues His173, His175, and Asp186 each contribute to the Zn(2+) site. The JAMM motif signature appears at 173–186; the sequence is HNHPSGAATPSRAD.

The protein belongs to the UPF0758 family.

This Polaromonas sp. (strain JS666 / ATCC BAA-500) protein is UPF0758 protein Bpro_0948.